We begin with the raw amino-acid sequence, 215 residues long: Pyridoxine/pyridoxamine 5'-phosphate oxidase (215 aa).

Substrate contacts are provided by residues 9-12 (RRDY) and lysine 69. FMN contacts are provided by residues 64-69 (RILLLK), 79-80 (FT), lysine 86, and glutamine 108. Substrate is bound by residues tyrosine 126, arginine 130, and serine 134. FMN contacts are provided by residues 143-144 (QS) and tryptophan 188. Residue 194–196 (RLH) participates in substrate binding. Arginine 198 is an FMN binding site.

The protein belongs to the pyridoxamine 5'-phosphate oxidase family. Homodimer. FMN serves as cofactor.

The catalysed reaction is pyridoxamine 5'-phosphate + O2 + H2O = pyridoxal 5'-phosphate + H2O2 + NH4(+). It catalyses the reaction pyridoxine 5'-phosphate + O2 = pyridoxal 5'-phosphate + H2O2. It participates in cofactor metabolism; pyridoxal 5'-phosphate salvage; pyridoxal 5'-phosphate from pyridoxamine 5'-phosphate: step 1/1. It functions in the pathway cofactor metabolism; pyridoxal 5'-phosphate salvage; pyridoxal 5'-phosphate from pyridoxine 5'-phosphate: step 1/1. Its function is as follows. Catalyzes the oxidation of either pyridoxine 5'-phosphate (PNP) or pyridoxamine 5'-phosphate (PMP) into pyridoxal 5'-phosphate (PLP). This chain is Pyridoxine/pyridoxamine 5'-phosphate oxidase, found in Pseudomonas fluorescens (strain SBW25).